The sequence spans 141 residues: Nucleoside triphosphatase NudI (141 aa).

Positions Met1–Leu141 constitute a Nudix hydrolase domain. A Nudix box motif is present at residues Gly38 to Gly59.

Belongs to the Nudix hydrolase family. NudI subfamily. As to quaternary structure, monomer. Requires Mg(2+) as cofactor.

It carries out the reaction a ribonucleoside 5'-triphosphate + H2O = a ribonucleoside 5'-phosphate + diphosphate + H(+). The enzyme catalyses a 2'-deoxyribonucleoside 5'-triphosphate + H2O = a 2'-deoxyribonucleoside 5'-phosphate + diphosphate + H(+). The catalysed reaction is dUTP + H2O = dUMP + diphosphate + H(+). It catalyses the reaction dTTP + H2O = dTMP + diphosphate + H(+). It carries out the reaction dCTP + H2O = dCMP + diphosphate + H(+). Catalyzes the hydrolysis of nucleoside triphosphates, with a preference for pyrimidine deoxynucleoside triphosphates (dUTP, dTTP and dCTP). The sequence is that of Nucleoside triphosphatase NudI from Klebsiella pneumoniae (strain 342).